Here is a 700-residue protein sequence, read N- to C-terminus: Phenylalanine ammonia-lyase hkm12 (700 aa).

Y82 acts as the Proton donor/acceptor in catalysis. The 5-imidazolinone (Ala-Gly) cross-link spans 183 to 185 (ASG). S184 carries the 2,3-didehydroalanine (Ser) modification. The (E)-cinnamate site is built by N242, Q325, R331, N361, K432, E460, and N463.

The protein belongs to the PAL/histidase family. Contains an active site 4-methylidene-imidazol-5-one (MIO), which is formed autocatalytically by cyclization and dehydration of residues Ala-Ser-Gly.

The catalysed reaction is L-phenylalanine = (E)-cinnamate + NH4(+). It functions in the pathway secondary metabolite biosynthesis. Its function is as follows. Phenylalanine ammonia-lyase; part of the gene cluster that mediates the biosynthesis of hancockiamides, an unusual new family of N-cinnamoylated piperazines. The NRPS hkm10 and the NmrA-like reductase hkm9 are proposed to convert two molecules of L-Phe to the intermediary piperazine called xenocockiamide A. Xenocockiamide A is then converted to hancockiamide D via a series of hydroxylations and O-methylations. The tyrosinase hkm6 may catalyze an aromatic hydroxylation, then the 2-oxoglutarate-dependent Fe(II) dioxygenase hkm4 and the FAD-dependent phenol hydroxylase hkm7 may catalyze consecutive hydroxylations to install 2 more hydroxy groups, and the methyltransferase hkm8 probably catalyzes two methylations using 2 molecules of S-adenosyl-L-methionine (SAM). The NRPS hkm11 activates and transfers trans-cinnamate supplied by the PAL hkm12 to hancockiamide D and produces hancockiamide A. NRPS Hkm11 has the flexibility to tolerate the bulky hancockiamide G as a substrate and the absence of the acetyl-transferase hkm3 opens up the opportunity for hkm11 to introduce a second N-cinnamoyl moiety. The cytochrome P450 monooxygenase hkm5 catalyzes the methylenedioxy bridge formation, converting hancockiamide A into hancockiamide G. Hkm5 can also convert hancockiamide B into hancockiamide C, and hancockiamide D into hancockiamide H. The N-acetyltransferase hkm3 finally transfers an acetyl group to 1-N of piperazine, converting hancockiamide A into hancockiamide B and hancockiamide G into hancockiamide C. This chain is Phenylalanine ammonia-lyase hkm12, found in Aspergillus hancockii.